The chain runs to 997 residues: DNA polymerase I (997 aa).

A 5'-3' exonuclease domain is found at V174–S261. One can recognise a 3'-5' exonuclease domain in the interval V428–E589.

The protein belongs to the DNA polymerase type-A family.

The catalysed reaction is DNA(n) + a 2'-deoxyribonucleoside 5'-triphosphate = DNA(n+1) + diphosphate. In terms of biological role, in addition to polymerase activity, this DNA polymerase exhibits 3'-5' and 5'-3' exonuclease activity. The sequence is that of DNA polymerase I (polA) from Treponema pallidum (strain Nichols).